The chain runs to 130 residues: Small ribosomal subunit protein uS11c (130 aa).

Belongs to the universal ribosomal protein uS11 family. As to quaternary structure, part of the 30S ribosomal subunit.

The protein localises to the plastid. It localises to the chloroplast. This chain is Small ribosomal subunit protein uS11c, found in Pinus koraiensis (Korean pine).